The chain runs to 284 residues: MEGLGGNVPSNQCRNFLSPSAFGAHHNSLSSGPAYTVGDRTHSVISESAKQCSPCPAPTSPPNPAISYGYHFGSSYYSCRNVGIQQTGLKSGAHASLAGYPVDKYMDVSSLTNTPVPTDEVSARAKEFAFYQSYPNPYQRVSGYLDVPVVPTISGHGEPRHEALISMEGYQPWTFANSWNGQVYCPKDQTQTPHFWKSPLSGDVMHNQTDINIYRRGRKKRVPYTKTQLKELEREYATNKFITKEKRRRISTATNLTERQVTIWFQNRRVKEKKVVSKVKENIP.

The segment at residues 217–276 (GRKKRVPYTKTQLKELEREYATNKFITKEKRRRISTATNLTERQVTIWFQNRRVKEKKVV) is a DNA-binding region (homeobox).

Belongs to the Abd-B homeobox family.

It is found in the nucleus. Functionally, sequence-specific transcription factor that binds gene promoters and activates their transcription. Part of a developmental regulatory system that provides cells with specific positional identities on the anterior-posterior axis. The chain is Homeobox protein Hox-D13 (HOXD13) from Heterodontus francisci (Horn shark).